Here is a 538-residue protein sequence, read N- to C-terminus: ATP synthase subunit beta 2 (538 aa).

Over residues 1-10 the composition is skewed to polar residues; sequence MADPQATNGT. Residues 1 to 30 are disordered; that stretch reads MADPQATNGTGAACAERDASDVGDVSDVGD. Position 185-192 (185-192) interacts with ATP; it reads GGAGVGKT. Residues 494–505 show a composition bias toward basic and acidic residues; the sequence is AAAREADARREA. The disordered stretch occupies residues 494–538; the sequence is AAAREADARREAAAAASVAGPGTTSGTTSDPASGSAEPQGARHGR. Residues 506 to 529 are compositionally biased toward low complexity; it reads AAAASVAGPGTTSGTTSDPASGSA.

It belongs to the ATPase alpha/beta chains family. As to quaternary structure, F-type ATPases have 2 components, CF(1) - the catalytic core - and CF(0) - the membrane proton channel. CF(1) has five subunits: alpha(3), beta(3), gamma(1), delta(1), epsilon(1). CF(0) has three main subunits: a(1), b(2) and c(9-12). The alpha and beta chains form an alternating ring which encloses part of the gamma chain. CF(1) is attached to CF(0) by a central stalk formed by the gamma and epsilon chains, while a peripheral stalk is formed by the delta and b chains.

The protein localises to the cell inner membrane. The enzyme catalyses ATP + H2O + 4 H(+)(in) = ADP + phosphate + 5 H(+)(out). Produces ATP from ADP in the presence of a proton gradient across the membrane. The catalytic sites are hosted primarily by the beta subunits. The polypeptide is ATP synthase subunit beta 2 (Burkholderia pseudomallei (strain K96243)).